A 264-amino-acid chain; its full sequence is N-carbamoylsarcosine amidase (264 aa).

Cys-177 functions as the Nucleophile in the catalytic mechanism. Residues Thr-240 to His-264 form a disordered region.

In terms of assembly, homotetramer. Sulfate is required as a cofactor.

It catalyses the reaction N-carbamoylsarcosine + H2O + 2 H(+) = sarcosine + NH4(+) + CO2. The protein operates within amine and polyamine degradation; creatinine degradation; sarcosine from creatinine: step 3/3. This Arthrobacter sp protein is N-carbamoylsarcosine amidase.